The primary structure comprises 269 residues: Probable membrane transporter protein YfcA (269 aa).

Residues M1–L7 are Periplasmic-facing. Residues F8–I28 form a helical membrane-spanning segment. Residues D29–S30 lie on the Cytoplasmic side of the membrane. A helical transmembrane segment spans residues I31 to A51. The Periplasmic segment spans residues N52–K84. Residues L85–Q105 traverse the membrane as a helical segment. Residues A106 to Q111 lie on the Cytoplasmic side of the membrane. Residues I112–E132 form a helical membrane-spanning segment. Topologically, residues E133–D156 are periplasmic. The chain crosses the membrane as a helical span at residues G157–F177. The Cytoplasmic portion of the chain corresponds to N178–G197. Residues L198–G218 form a helical membrane-spanning segment. Residues Q219–N269 are Periplasmic-facing.

This sequence belongs to the 4-toluene sulfonate uptake permease (TSUP) (TC 2.A.102) family.

It is found in the cell inner membrane. The polypeptide is Probable membrane transporter protein YfcA (yfcA) (Escherichia coli O157:H7).